We begin with the raw amino-acid sequence, 367 residues long: Anhydro-N-acetylmuramic acid kinase (367 aa).

13 to 20 (GTSMDGAD) serves as a coordination point for ATP.

The protein belongs to the anhydro-N-acetylmuramic acid kinase family.

It catalyses the reaction 1,6-anhydro-N-acetyl-beta-muramate + ATP + H2O = N-acetyl-D-muramate 6-phosphate + ADP + H(+). It functions in the pathway amino-sugar metabolism; 1,6-anhydro-N-acetylmuramate degradation. Its pathway is cell wall biogenesis; peptidoglycan recycling. Functionally, catalyzes the specific phosphorylation of 1,6-anhydro-N-acetylmuramic acid (anhMurNAc) with the simultaneous cleavage of the 1,6-anhydro ring, generating MurNAc-6-P. Is required for the utilization of anhMurNAc either imported from the medium or derived from its own cell wall murein, and thus plays a role in cell wall recycling. The polypeptide is Anhydro-N-acetylmuramic acid kinase (Neisseria meningitidis serogroup C / serotype 2a (strain ATCC 700532 / DSM 15464 / FAM18)).